Here is a 487-residue protein sequence, read N- to C-terminus: Lysophospholipid acyltransferase 5 (487 aa).

Ala-2 is modified (N-acetylalanine). A run of 4 helical transmembrane segments spans residues 44–64 (LIFS…YLFY), 84–104 (FNFG…FLIL), 111–131 (VTAV…GYYY), and 180–200 (GVPS…FLVG). Asn-225 is a glycosylation site (N-linked (GlcNAc...) asparagine). Helical transmembrane passes span 236–256 (LGLV…DDYL) and 285–305 (VTCW…FNGF). Residues Asn-308 and Asn-331 are each glycosylated (N-linked (GlcNAc...) asparagine). Residues Asn-338 and His-374 contribute to the active site. A run of 3 helical transmembrane segments spans residues 364–384 (GLSL…LICF), 422–442 (LVQQ…FCLF), and 453–473 (SIYF…PYIH). Residues 484–487 (KKRE) carry the Di-lysine motif motif.

The protein belongs to the membrane-bound acyltransferase family. In terms of tissue distribution, detected ubiquitously, with high expression levels in small intestine, brown adipose tissue, liver, kidney and testis. Expressed in liver and both proximal and distal small intestine (at protein level). Expressed in peritoneal macrophages.

It localises to the endoplasmic reticulum membrane. The catalysed reaction is a 1-acyl-sn-glycero-3-phosphocholine + an acyl-CoA = a 1,2-diacyl-sn-glycero-3-phosphocholine + CoA. It carries out the reaction a 1-acyl-sn-glycero-3-phosphoethanolamine + an acyl-CoA = a 1,2-diacyl-sn-glycero-3-phosphoethanolamine + CoA. The enzyme catalyses a 1-acyl-sn-glycero-3-phospho-L-serine + an acyl-CoA = a 1,2-diacyl-sn-glycero-3-phospho-L-serine + CoA. It catalyses the reaction (9Z,12Z)-octadecadienoyl-CoA + a 1-acyl-sn-glycero-3-phosphocholine = 1-acyl-2-(9Z,12Z)-octadecadienoyl-sn-glycero-3-phosphocholine + CoA. The catalysed reaction is (5Z,8Z,11Z,14Z)-eicosatetraenoyl-CoA + a 1-acyl-sn-glycero-3-phosphocholine = 1-acyl-2-(5Z,8Z,11Z,14Z-eicosatetraenoyl)-sn-glycero-3-phosphocholine + CoA. It carries out the reaction dodecanoyl-CoA + 1-hexadecanoyl-sn-glycero-3-phosphocholine = 1-hexadecanoyl-2-dodecanoyl-sn-glycero-3-phosphocholine + CoA. The enzyme catalyses octadecanoyl-CoA + 1-hexadecanoyl-sn-glycero-3-phosphocholine = 1-hexadecanoyl-2-octadecanoyl-sn-glycero-3-phosphocholine + CoA. It catalyses the reaction 1-dodecanoyl-sn-glycero-3-phosphocholine + hexadecanoyl-CoA = 1-dodecanoyl-2-hexadecanoyl-sn-glycero-3-phosphocholine + CoA. The catalysed reaction is 1-tetradecanoyl-sn-glycero-3-phosphocholine + hexadecanoyl-CoA = 1-tetradecanoyl-2-hexadecanoyl-sn-glycero-3-phosphocholine + CoA. It carries out the reaction 1-hexadecanoyl-sn-glycero-3-phosphocholine + hexadecanoyl-CoA = 1,2-dihexadecanoyl-sn-glycero-3-phosphocholine + CoA. The enzyme catalyses 1-octadecanoyl-sn-glycero-3-phosphocholine + hexadecanoyl-CoA = 1-octadecanoyl-2-hexadecanoyl-sn-glycero-3-phosphocholine + CoA. It catalyses the reaction 1-(9Z-octadecenoyl)-sn-glycero-3-phosphocholine + hexadecanoyl-CoA = 1-(9Z-octadecenoyl)-2-hexadecanoyl-sn-glycero-3-phosphocholine + CoA. The catalysed reaction is (9Z)-hexadecenoyl-CoA + 1-hexadecanoyl-sn-glycero-3-phosphocholine = 1-hexadecanoyl-2-(9Z-hexadecenoyl)-sn-glycero-3-phosphocholine + CoA. It carries out the reaction 1-hexadecanoyl-sn-glycero-3-phosphocholine + (9Z)-octadecenoyl-CoA = 1-hexadecanoyl-2-(9Z-octadecenoyl)-sn-glycero-3-phosphocholine + CoA. The enzyme catalyses (9Z,12Z)-octadecadienoyl-CoA + 1-hexadecanoyl-sn-glycero-3-phosphocholine = 1-hexadecanoyl-2-(9Z,12Z-octadecadienoyl)-sn-glycero-3-phosphocholine + CoA. It catalyses the reaction 1-dodecanoyl-sn-glycero-3-phosphocholine + (5Z,8Z,11Z,14Z)-eicosatetraenoyl-CoA = 1-dodecanoyl-2-(5Z,8Z,11Z,14Z)-eicosatetraenoyl-sn-glycero-3-phosphocholine + CoA. The catalysed reaction is (5Z,8Z,11Z,14Z)-eicosatetraenoyl-CoA + 1-hexadecanoyl-sn-glycero-3-phosphocholine = 1-hexadecanoyl-2-(5Z,8Z,11Z,14Z-eicosatetraenoyl)-sn-glycero-3-phosphocholine + CoA. It carries out the reaction 1-octadecanoyl-sn-glycero-3-phosphocholine + (5Z,8Z,11Z,14Z)-eicosatetraenoyl-CoA = 1-octadecanoyl-2-(5Z,8Z,11Z,14Z-eicosatetraenoyl)-sn-glycero-3-phosphocholine + CoA. The enzyme catalyses 1-eicosanoyl-sn-glycero-3-phosphocholine + (5Z,8Z,11Z,14Z)-eicosatetraenoyl-CoA = 1-eicosanoyl-2-(5Z,8Z,11Z,14Z)-eicosatetraenoyl-sn-glycero-3-phosphocholine + CoA. It catalyses the reaction 1-(9Z-octadecenoyl)-sn-glycero-3-phosphocholine + (9Z)-octadecenoyl-CoA = 1,2-di-(9Z-octadecenoyl)-sn-glycero-3-phosphocholine + CoA. The catalysed reaction is 1-(9Z-octadecenoyl)-sn-glycero-3-phosphocholine + (9Z,12Z)-octadecadienoyl-CoA = 1-(9Z)-octadecenoyl-2-(9Z,12Z)-octadecadienoyl-sn-glycero-3-phosphocholine + CoA. It carries out the reaction 1-(9Z-octadecenoyl)-sn-glycero-3-phosphocholine + (5Z,8Z,11Z,14Z)-eicosatetraenoyl-CoA = 1-(9Z)-octadecenoyl-2-(5Z,8Z,11Z,14Z)-icosatetraenoyl-sn-glycero-3-phosphocholine + CoA. The enzyme catalyses a 1-acyl-sn-glycero-3-phosphoethanolamine + (9Z,12Z)-octadecadienoyl-CoA = 1-acyl-2-(9Z,12Z)-octadecadienoyl-sn-glycero-3-phosphoethanolamine + CoA. It catalyses the reaction 1-(9Z-octadecenoyl)-sn-glycero-3-phosphoethanolamine + (9Z,12Z)-octadecadienoyl-CoA = 1-(9Z)-octadecenoyl-2-(9Z,12Z)-octadecadienoyl-sn-glycero-3-phosphoethanolamine + CoA. The catalysed reaction is 1-(10Z-heptadecenoyl)-sn-glycero-3-phosphoethanolamine + (9Z,12Z)-octadecadienoyl-CoA = 1-(10Z-heptadecenoyl)-2-(9Z,12Z-octadecadienoyl)-sn-glycero-3-phosphoethanolamine + CoA. It carries out the reaction a 1-acyl-sn-glycero-3-phosphoethanolamine + (5Z,8Z,11Z,14Z)-eicosatetraenoyl-CoA = 1-acyl-2-(5Z,8Z,11Z,14Z)-eicosatetraenoyl-sn-glycero-3-phosphoethanolamine + CoA. The enzyme catalyses 1-hexadecanoyl-sn-glycero-3-phosphoethanolamine + (5Z,8Z,11Z,14Z)-eicosatetraenoyl-CoA = 1-hexadecanoyl-2-(5Z,8Z,11Z,14Z-eicosatetraenoyl)-sn-glycero-3-phosphoethanolamine + CoA. It catalyses the reaction 1-(9Z-octadecenoyl)-sn-glycero-3-phosphoethanolamine + (5Z,8Z,11Z,14Z)-eicosatetraenoyl-CoA = 1-(9Z)-octadecenoyl-2-(5Z,8Z,11Z,14Z)-eicosatetraenoyl-sn-glycero-3-phosphoethanolamine + CoA. The catalysed reaction is 1-(10Z-heptadecenoyl)-sn-glycero-3-phosphoethanolamine + (5Z,8Z,11Z,14Z)-eicosatetraenoyl-CoA = 1-(10Z-heptadecenoyl)-2-(5Z,8Z,11Z,14Z-eicosatetraenoyl)-sn-glycero-3-phosphoethanolamine + CoA. It carries out the reaction a 1-O-(1Z-alkenyl)-sn-glycero-3-phosphoethanolamine + (5Z,8Z,11Z,14Z)-eicosatetraenoyl-CoA = 1-O-(1Z)-alkenyl-2-(5Z,8Z,11Z,14Z)-eicosatetraenoyl-sn-glycero-3-phosphoethanolamine + CoA. The enzyme catalyses a 1-acyl-sn-glycero-3-phospho-L-serine + (9Z,12Z)-octadecadienoyl-CoA = 1-acyl-2-(9Z,12Z-octadecadienoyl)-sn-glycero-3-phospho-L-serine + CoA. It catalyses the reaction a 1-acyl-sn-glycero-3-phospho-L-serine + (5Z,8Z,11Z,14Z)-eicosatetraenoyl-CoA = 1-acyl-2-(5Z,8Z,11Z,14Z-eicosatetraenoyl)-sn-glycero-3-phospho-L-serine + CoA. The catalysed reaction is 1-hexadecanoyl-sn-glycero-3-phospho-L-serine + (9Z)-octadecenoyl-CoA = 1-hexadecanoyl-2-(9Z-octadecenoyl)-sn-glycero-3-phospho-L-serine + CoA. It carries out the reaction 1-(9Z-octadecenoyl)-sn-glycero-3-phospho-L-serine + (9Z)-octadecenoyl-CoA = 1,2-di-(9Z)-octadecenoyl-sn-glycero-3-phospho-L-serine + CoA. The enzyme catalyses 1-hexadecanoyl-sn-glycero-3-phospho-L-serine + (9Z,12Z)-octadecadienoyl-CoA = 1-hexadecanoyl-2-(9Z,12Z-octadecadienoyl)-sn-glycero-3-phospho-L-serine + CoA. It catalyses the reaction 1-(9Z-octadecenoyl)-sn-glycero-3-phospho-L-serine + (9Z,12Z)-octadecadienoyl-CoA = 1-(9Z-octadecenoyl)-2-(9Z,12Z-octadienoyl)-sn-glycero-3-phospho-L-serine + CoA. The catalysed reaction is 1-hexadecanoyl-sn-glycero-3-phospho-L-serine + (5Z,8Z,11Z,14Z)-eicosatetraenoyl-CoA = 1-hexadecanoyl-2-(5Z,8Z,11Z,14Z-eicosatetraenoyl)-sn-glycero-3-phospho-L-serine + CoA. It carries out the reaction 1-(9Z-octadecenoyl)-sn-glycero-3-phospho-L-serine + (5Z,8Z,11Z,14Z)-eicosatetraenoyl-CoA = 1-(9Z-octadecenoyl)-2-(5Z,8Z,11Z,14Z-eicosatetraenoyl)-sn-glycero-3-phospho-L-serine + CoA. Its pathway is lipid metabolism; phospholipid metabolism. Functionally, lysophospholipid O-acyltransferase (LPLAT) that catalyzes the reacylation step of the phospholipid remodeling process also known as the Lands cycle. Catalyzes transfer of the fatty acyl chain from fatty acyl-CoA to 1-acyl lysophospholipid to form various classes of phospholipids. Converts 1-acyl lysophosphatidylcholine (LPC) into phosphatidylcholine (PC) (LPCAT activity), 1-acyl lysophosphatidylserine (LPS) into phosphatidylserine (PS) (LPSAT activity) and 1-acyl lysophosphatidylethanolamine (LPE) into phosphatidylethanolamine (PE) (LPEAT activity). Favors polyunsaturated fatty acyl-CoAs as acyl donors compared to saturated fatty acyl-CoAs. Has higher activity for LPC acyl acceptors compared to LPEs and LPSs. Can also transfer the fatty acyl chain from fatty acyl-CoA to 1-O-alkyl lysophospholipid or 1-O-alkenyl lysophospholipid with lower efficiency. Acts as a major LPC O-acyltransferase in liver and intestine. As a component of the liver X receptor/NR1H3 or NR1H2 signaling pathway, mainly catalyzes the incorporation of arachidonate into PCs of endoplasmic reticulum (ER) membranes, increasing membrane dynamics and enabling triacylglycerols transfer to nascent very low-density lipoprotein (VLDL) particles. Promotes processing of sterol regulatory protein SREBF1 in hepatocytes, likely by facilitating the translocation of SREBF1-SCAP complex from ER to the Golgi apparatus. Participates in mechanisms by which the liver X receptor/NR1H3 or NR1H2 signaling pathway counteracts lipid-induced ER stress response and inflammation. Down-regulates hepatic inflammation by limiting arachidonic acid availability for synthesis of inflammatory eicosanoids, such as prostaglandins. In enterocytes, acts as a component of a gut-brain feedback loop that coordinates dietary lipid absorption and food intake. Regulates the abundance of PCs containing linoleate and arachidonate in enterocyte membranes, enabling passive diffusion of fatty acids and cholesterol across the membrane for efficient chylomicron assembly. In the intestinal crypt, acts as a component of dietary-responsive phospholipid-cholesterol axis, regulating the biosynthesis of cholesterol and its mitogenic effects on intestinal stem cells. This is Lysophospholipid acyltransferase 5 (Lpcat3) from Mus musculus (Mouse).